The chain runs to 149 residues: MERTLIIVKPDAVQRGLVGEVLRRLEQRGLRFVGLKLMKVDREVAERHYAEHRGKPFYEDLLAFITSGPVVVGVVEGPRAIEITRKTMGKTDPAQAEPGTIRGDLALTIGQNVIHGSDSPEKASYEIGLFFREDELVSYERAIDRWIMG.

Positions 9, 57, 85, 91, 102, and 112 each coordinate ATP. His115 serves as the catalytic Pros-phosphohistidine intermediate.

This sequence belongs to the NDK family. In terms of assembly, homotetramer. Mg(2+) serves as cofactor.

It localises to the cytoplasm. The enzyme catalyses a 2'-deoxyribonucleoside 5'-diphosphate + ATP = a 2'-deoxyribonucleoside 5'-triphosphate + ADP. The catalysed reaction is a ribonucleoside 5'-diphosphate + ATP = a ribonucleoside 5'-triphosphate + ADP. Functionally, major role in the synthesis of nucleoside triphosphates other than ATP. The ATP gamma phosphate is transferred to the NDP beta phosphate via a ping-pong mechanism, using a phosphorylated active-site intermediate. The polypeptide is Nucleoside diphosphate kinase (Thermomicrobium roseum (strain ATCC 27502 / DSM 5159 / P-2)).